The sequence spans 121 residues: Large ribosomal subunit protein uL22 (121 aa).

It belongs to the universal ribosomal protein uL22 family. As to quaternary structure, part of the 50S ribosomal subunit.

Its function is as follows. This protein binds specifically to 23S rRNA; its binding is stimulated by other ribosomal proteins, e.g. L4, L17, and L20. It is important during the early stages of 50S assembly. It makes multiple contacts with different domains of the 23S rRNA in the assembled 50S subunit and ribosome. In terms of biological role, the globular domain of the protein is located near the polypeptide exit tunnel on the outside of the subunit, while an extended beta-hairpin is found that lines the wall of the exit tunnel in the center of the 70S ribosome. This Parasynechococcus marenigrum (strain WH8102) protein is Large ribosomal subunit protein uL22.